Consider the following 320-residue polypeptide: Solute carrier family 25 member 33 (320 aa).

3 Solcar repeats span residues 9–118, 126–213, and 231–315; these read ENTL…AKEQ, NSNT…LKKC, and SGFF…IVYL. The next 6 helical transmembrane spans lie at 12 to 32, 49 to 65, 121 to 141, 190 to 210, 233 to 253, and 298 to 318; these read LLHL…TCPL, VYYP…AGMV, GIFV…AAFV, LTAS…YESL, FFGL…IAYP, and QIPN…LLGE.

Belongs to the mitochondrial carrier (TC 2.A.29) family.

The protein localises to the mitochondrion inner membrane. The catalysed reaction is UTP(in) + UDP(out) = UTP(out) + UDP(in). It catalyses the reaction dUTP(out) + UTP(in) = dUTP(in) + UTP(out). The enzyme catalyses 5-methyl-UTP(out) + UTP(in) = 5-methyl-UTP(in) + UTP(out). It carries out the reaction 5-methyl-UDP(out) + UTP(in) = 5-methyl-UDP(in) + UTP(out). The catalysed reaction is UTP(in) + CTP(out) = UTP(out) + CTP(in). It catalyses the reaction CDP(out) + UTP(in) = CDP(in) + UTP(out). The enzyme catalyses dCTP(out) + UTP(in) = dCTP(in) + UTP(out). It carries out the reaction dCDP(out) + UTP(in) = dCDP(in) + UTP(out). The catalysed reaction is UTP(in) + GTP(out) = UTP(out) + GTP(in). It catalyses the reaction UTP(in) + GDP(out) = UTP(out) + GDP(in). The enzyme catalyses dGTP(out) + UTP(in) = dGTP(in) + UTP(out). It carries out the reaction dGDP(out) + UTP(in) = dGDP(in) + UTP(out). The catalysed reaction is ITP(out) + UTP(in) = ITP(in) + UTP(out). In terms of biological role, mitochondrial transporter that imports/exports pyrimidine nucleotides into and from mitochondria. Selectively transports uridine, thymidine, guanosine, cytosine and inosine (deoxy)nucleoside di- and triphosphates by an antiport mechanism. May import (deoxy)nucleoside triphosphates in exchange for intramitochondrial (deoxy)nucleoside diphosphates, thus providing precursors necessary for de novo synthesis of mitochondrial DNA and RNA while exporting products of their catabolism. Participates in mitochondrial genome maintenance, regulation of mitochondrial membrane potential and mitochondrial respiration. Upon INS or IGF1 stimulation regulates cell growth and proliferation by controlling mitochondrial DNA replication and transcription, the ratio of mitochondria-to nuclear-encoded components of the electron transport chain resulting in control of mitochondrial ROS production. Participates in dendritic cell endocytosis and may associate with mitochondrial oxidative phosphorylation. This Mus musculus (Mouse) protein is Solute carrier family 25 member 33 (Slc25a33).